The sequence spans 459 residues: Light-independent protochlorophyllide reductase subunit N (459 aa).

Residues Cys22, Cys47, and Cys107 each coordinate [4Fe-4S] cluster.

The protein belongs to the BchN/ChlN family. As to quaternary structure, protochlorophyllide reductase is composed of three subunits; ChlL, ChlN and ChlB. Forms a heterotetramer of two ChlB and two ChlN subunits. [4Fe-4S] cluster serves as cofactor.

It localises to the plastid. It is found in the chloroplast. The catalysed reaction is chlorophyllide a + oxidized 2[4Fe-4S]-[ferredoxin] + 2 ADP + 2 phosphate = protochlorophyllide a + reduced 2[4Fe-4S]-[ferredoxin] + 2 ATP + 2 H2O. Its pathway is porphyrin-containing compound metabolism; chlorophyll biosynthesis (light-independent). Its function is as follows. Component of the dark-operative protochlorophyllide reductase (DPOR) that uses Mg-ATP and reduced ferredoxin to reduce ring D of protochlorophyllide (Pchlide) to form chlorophyllide a (Chlide). This reaction is light-independent. The NB-protein (ChlN-ChlB) is the catalytic component of the complex. The chain is Light-independent protochlorophyllide reductase subunit N from Pinus contorta (Shore pine).